Reading from the N-terminus, the 90-residue chain is Probable Fe(2+)-trafficking protein (90 aa).

The protein belongs to the Fe(2+)-trafficking protein family.

Its function is as follows. Could be a mediator in iron transactions between iron acquisition and iron-requiring processes, such as synthesis and/or repair of Fe-S clusters in biosynthetic enzymes. The polypeptide is Probable Fe(2+)-trafficking protein (Methylococcus capsulatus (strain ATCC 33009 / NCIMB 11132 / Bath)).